The following is a 556-amino-acid chain: Formate--tetrahydrofolate ligase (556 aa).

64–71 is a binding site for ATP; sequence TPAGEGKT.

It belongs to the formate--tetrahydrofolate ligase family.

It carries out the reaction (6S)-5,6,7,8-tetrahydrofolate + formate + ATP = (6R)-10-formyltetrahydrofolate + ADP + phosphate. It functions in the pathway one-carbon metabolism; tetrahydrofolate interconversion. The polypeptide is Formate--tetrahydrofolate ligase (Actinobacillus pleuropneumoniae serotype 5b (strain L20)).